The primary structure comprises 99 residues: Malonate decarboxylase acyl carrier protein (99 aa).

Serine 25 carries the O-(phosphoribosyl dephospho-coenzyme A)serine modification.

This sequence belongs to the MdcC family. Covalently binds the prosthetic group of malonate decarboxylase.

It localises to the cytoplasm. Subunit of malonate decarboxylase, it is an acyl carrier protein to which acetyl and malonyl thioester residues are bound via a 2'-(5''-phosphoribosyl)-3'-dephospho-CoA prosthetic group and turn over during the catalytic mechanism. The chain is Malonate decarboxylase acyl carrier protein from Pseudomonas putida (strain GB-1).